Consider the following 380-residue polypeptide: Mitogen-activated protein kinase mpkC (380 aa).

A Protein kinase domain is found at tyrosine 20–leucine 300. ATP-binding positions include isoleucine 26–valine 34 and lysine 49. Aspartate 141 acts as the Proton acceptor in catalysis. At threonine 171 the chain carries Phosphothreonine. The TXY motif lies at threonine 171–tyrosine 173. A Phosphotyrosine modification is found at tyrosine 173.

The protein belongs to the protein kinase superfamily. Ser/Thr protein kinase family. MAP kinase subfamily. HOG1 sub-subfamily. It depends on Mg(2+) as a cofactor. Dually phosphorylated on Thr-171 and Tyr-173, which activates the enzyme.

The enzyme catalyses L-seryl-[protein] + ATP = O-phospho-L-seryl-[protein] + ADP + H(+). It catalyses the reaction L-threonyl-[protein] + ATP = O-phospho-L-threonyl-[protein] + ADP + H(+). Activated by tyrosine and threonine phosphorylation. In terms of biological role, mitogen-activated protein kinase required for growth on media where sorbitol or mannitol is the sole carbon source. This is Mitogen-activated protein kinase mpkC (mpkC) from Aspergillus clavatus (strain ATCC 1007 / CBS 513.65 / DSM 816 / NCTC 3887 / NRRL 1 / QM 1276 / 107).